Reading from the N-terminus, the 469-residue chain is Lactonohydrolase oryH (469 aa).

The first 20 residues, 1–20 (MYLSLRLVSLALCIAPLASA), serve as a signal peptide directing secretion.

This sequence belongs to the SMP-30/CGR1 family.

The protein operates within secondary metabolite biosynthesis. Its function is as follows. Lactonohydrolase; part of the gene cluster that mediates the biosynthesis of oryzines, natural products with an unusual maleidride backbone. The two subunits of the fungal fatty acid synthase oryfasA and oryfasB probably form octenoic acid. This fatty acid is most likely activated by the acyl-CoA ligase oryP to give octenyl-CoA before the citrate synthase-like protein oryE catalyzes condensation with oxaloacetate to form tricarboxylic acid. The next steps of the pathways are conjectural, but a favorite possible route has been proposed, beginning with decarboxylation and concomitant dehydration by the decarboxylase oryM, followed by tautomerization, which may lead to the production of a diene intermediate. Reduction of this diene intermediate could give the known metabolite piliformic acid. On the pathway to oryzine B and oryzine A, however, hydroxylation of the diene by the alpha-ketoglutarate-dependent dioxygenase oryG and lactonisation by the lactonohydrolases oryH or oryL could give oryzine B directly. Finally, enoyl reduction by the dehydrogenase oryD would then convert oryzine B into oryzine A. The protein is Lactonohydrolase oryH of Aspergillus oryzae (strain ATCC 42149 / RIB 40) (Yellow koji mold).